The chain runs to 691 residues: Germ cell nuclear acidic protein (691 aa).

Positions 22–25 match the SUMO interaction motif 1 (SIM) motif; that stretch reads ILNV. Residues 25–488 are disordered; the sequence is VQSSSDDTSG…GAAKVEKRKT (464 aa). Over residues 27-36 the composition is skewed to low complexity; that stretch reads SSSDDTSGSS. Residues 48-63 show a composition bias toward polar residues; the sequence is CILNVQSRSGDTSGSS. 3 short sequence motifs (SUMO interaction motif 1 (SIM)) span residues 76-79, 97-100, and 121-124; these read VVVI, LLEI, and IVIS. Residues 86–97 show a composition bias toward basic and acidic residues; it reads ECHTHEEKKAKL. Residues 124–333 show a composition bias toward acidic residues; the sequence is SDDDNDDDNG…VPDDNSDDLE (210 aa). Residues 467 to 488 are compositionally biased toward basic residues; it reads GHKKRGPSKKKPGAAKVEKRKT. The SprT-like domain occupies 522–677; that stretch reads VQRIYDLFNR…AKCKGSLVMV (156 aa).

It belongs to the serine-aspartate repeat-containing protein (SDr) family. Interacts (via SIM domains) with SUMO2; this interaction allows the GCNA recruitment to DPCs sites. Interacts with TOP2A; this interaction allows the resolution of topoisomerase II (TOP2A) DNA-protein cross-links. As to expression, expressed in germ cells of the testis (at protein level). Detected in skeletal muscle, liver, kidney, pancreas, heart, lung and brain. Expressed throughout spermatogenesis, from spermatogonia to elongated spermatids, in normal adult testis (at protein level).

Its subcellular location is the nucleus. The protein resides in the PML body. The protein localises to the chromosome. May play a role in DNA-protein cross-links (DPCs) clearance through a SUMO-dependent recruitment to sites of DPCs, ensuring the genomic stability by protecting germ cells and early embryos from various sources of damage. Can resolve the topoisomerase II (TOP2A) DPCs. This Homo sapiens (Human) protein is Germ cell nuclear acidic protein.